The primary structure comprises 106 residues: Large ribosomal subunit protein uL24 (106 aa).

The protein belongs to the universal ribosomal protein uL24 family. Part of the 50S ribosomal subunit.

Its function is as follows. One of two assembly initiator proteins, it binds directly to the 5'-end of the 23S rRNA, where it nucleates assembly of the 50S subunit. Functionally, one of the proteins that surrounds the polypeptide exit tunnel on the outside of the subunit. This chain is Large ribosomal subunit protein uL24, found in Desulforudis audaxviator (strain MP104C).